The following is a 276-amino-acid chain: Reaction center protein L chain (276 aa).

The next 3 membrane-spanning stretches (helical) occupy residues 33–56, 85–113, and 116–141; these read GFFGVTTLLFTVLGTALIVWGAAL, GLWQIITFSAIGAFVSWALREVEICRKLG, and YHIPFAFGFAILAYVSLVVIRPVMMG. His-154 and His-174 together coordinate (7R,8Z)-bacteriochlorophyll b. A helical membrane pass occupies residues 171–200; that stretch reads NPAHMLGITLFFTTCLALALHGSLILSAAN. His-191 is a Fe cation binding site. A ubiquinone is bound at residue Phe-217. The chain crosses the membrane as a helical span at residues 226–252; sequence GTLGIHRVGLILALSAVVWSIICMILS. His-231 serves as a coordination point for Fe cation.

The protein belongs to the reaction center PufL/M/PsbA/D family. As to quaternary structure, reaction center is composed of four bacteriochlorophylls, two bacteriopheophytins, two ubiquinones, one iron, and three highly hydrophobic polypeptide chains (designated L, M, and H).

It localises to the cellular chromatophore membrane. The reaction center is a membrane-bound complex that mediates the initial photochemical event in the electron transfer process of photosynthesis. In Rhodospirillum rubrum, this protein is Reaction center protein L chain (pufL).